The chain runs to 590 residues: Acetolactate synthase large subunit (590 aa).

Residue Glu61 participates in thiamine diphosphate binding. Residues Arg163, His271–Arg292, and Asp314–Asp333 contribute to the FAD site. Positions Gln405–Trp484 are thiamine pyrophosphate binding. 2 residues coordinate Mg(2+): Asp455 and Asn482.

It belongs to the TPP enzyme family. In terms of assembly, dimer of large and small chains. Requires Mg(2+) as cofactor. Thiamine diphosphate is required as a cofactor.

The protein resides in the plastid. The protein localises to the chloroplast. The enzyme catalyses 2 pyruvate + H(+) = (2S)-2-acetolactate + CO2. It functions in the pathway amino-acid biosynthesis; L-isoleucine biosynthesis; L-isoleucine from 2-oxobutanoate: step 1/4. It participates in amino-acid biosynthesis; L-valine biosynthesis; L-valine from pyruvate: step 1/4. The sequence is that of Acetolactate synthase large subunit (ilvB) from Porphyra purpurea (Red seaweed).